A 420-amino-acid chain; its full sequence is MAFCGTRTAARLSHSTRALHNTHRNFASQRTLNEVVIASAARTPIGSFQGTLSSLPATKLGSIAIKAAVERAGIPADEVKEVYMGNVLQAGQGQAPSRQATLGAGLAISTPTTTINKVCASGMKSVMLAAQSLMCGHQQVMVAGGMESMSNVPYCMSRGATPYGGVKLEDLIVKDGLTDVYNKIHMGNCAENTAKKFSISREEQDSFAIHSYTRSKAAWDSGLIANEIAPVTIAQKGKPDIIVQEDEEYKRVDFSKFPKLKTVFQKDNGTVTAANSSTLNDGAAALLLMTTEAANRLNVTPLARIVAFADAAVDPIDFPIAPAYAVPKLLSEAGLKKEDIAMWEINEAFSVVVLANIKMLGIDPARVNMNGGAVSLGHPIGMSGARIVGHMAHALKKGQFGIAGICNGGGGASAVLIEKL.

The N-terminal 33 residues, 1–33 (MAFCGTRTAARLSHSTRALHNTHRNFASQRTLN), are a transit peptide targeting the mitochondrion. Cys119 serves as the catalytic Acyl-thioester intermediate. Residues Tyr212, 251–253 (RVD), and Lys256 each bind CoA. Position 212 (Tyr212) interacts with K(+). Ala273 and Ala274 together coordinate K(+). CoA is bound at residue Ser277. Val374 serves as a coordination point for K(+). The active-site Proton donor/acceptor is Cys406.

This sequence belongs to the thiolase-like superfamily. Thiolase family. In terms of assembly, homotetramer.

The protein resides in the mitochondrion. It carries out the reaction 2 acetyl-CoA = acetoacetyl-CoA + CoA. The enzyme catalyses propanoyl-CoA + acetyl-CoA = 2-methyl-3-oxobutanoyl-CoA + CoA. Its pathway is lipid metabolism; fatty acid beta-oxidation. Functionally, this is one of the enzymes that catalyzes the last step of the mitochondrial beta-oxidation pathway, an aerobic process breaking down fatty acids into acetyl-CoA. Using free coenzyme A/CoA, catalyzes the thiolytic cleavage of medium- to long-chain 3-oxoacyl-CoAs into acetyl-CoA and a fatty acyl-CoA shortened by two carbon atoms. The activity of the enzyme is reversible and it can also catalyze the condensation of two acetyl-CoA molecules into acetoacetyl-CoA. Thereby, it plays a major role in ketone body metabolism. The protein is Acetyl-CoA acetyltransferase A, mitochondrial (acat1-a) of Xenopus laevis (African clawed frog).